The primary structure comprises 198 residues: dITP/XTP pyrophosphatase (198 aa).

10–15 (SGSDHK) contributes to the substrate binding site. Residues Glu-43 and Asp-72 each coordinate Mg(2+). Residue Asp-72 is the Proton acceptor of the active site. Substrate-binding positions include Ser-73, 154–157 (FGYD), Lys-177, and 182–183 (HR).

This sequence belongs to the HAM1 NTPase family. As to quaternary structure, homodimer. Mg(2+) serves as cofactor.

The enzyme catalyses XTP + H2O = XMP + diphosphate + H(+). It carries out the reaction dITP + H2O = dIMP + diphosphate + H(+). The catalysed reaction is ITP + H2O = IMP + diphosphate + H(+). Its function is as follows. Pyrophosphatase that catalyzes the hydrolysis of nucleoside triphosphates to their monophosphate derivatives, with a high preference for the non-canonical purine nucleotides XTP (xanthosine triphosphate), dITP (deoxyinosine triphosphate) and ITP. Seems to function as a house-cleaning enzyme that removes non-canonical purine nucleotides from the nucleotide pool, thus preventing their incorporation into DNA/RNA and avoiding chromosomal lesions. The protein is dITP/XTP pyrophosphatase of Leptospira biflexa serovar Patoc (strain Patoc 1 / Ames).